Consider the following 115-residue polypeptide: Large ribosomal subunit protein bL20c (115 aa).

This sequence belongs to the bacterial ribosomal protein bL20 family.

It localises to the plastid. It is found in the organellar chromatophore. Binds directly to 23S ribosomal RNA and is necessary for the in vitro assembly process of the 50S ribosomal subunit. It is not involved in the protein synthesizing functions of that subunit. In Paulinella chromatophora, this protein is Large ribosomal subunit protein bL20c.